The sequence spans 239 residues: Ribonuclease 3 (239 aa).

The 126-residue stretch at 12 to 137 folds into the RNase III domain; it reads ISRLEALIGY…LIATLYLDGG (126 aa). A Mg(2+)-binding site is contributed by Glu-50. Asp-54 is a catalytic residue. Mg(2+)-binding residues include Asp-123 and Glu-126. Residue Glu-126 is part of the active site. In terms of domain architecture, DRBM spans 162-231; sequence DAKTELQEWA…ATRLLEREGV (70 aa).

The protein belongs to the ribonuclease III family. As to quaternary structure, homodimer. Mg(2+) is required as a cofactor.

It is found in the cytoplasm. It catalyses the reaction Endonucleolytic cleavage to 5'-phosphomonoester.. Functionally, digests double-stranded RNA. Involved in the processing of primary rRNA transcript to yield the immediate precursors to the large and small rRNAs (23S and 16S). Processes some mRNAs, and tRNAs when they are encoded in the rRNA operon. Processes pre-crRNA and tracrRNA of type II CRISPR loci if present in the organism. The protein is Ribonuclease 3 of Agrobacterium fabrum (strain C58 / ATCC 33970) (Agrobacterium tumefaciens (strain C58)).